We begin with the raw amino-acid sequence, 1684 residues long: A-kinase anchor protein 12 (1684 aa).

The disordered stretch occupies residues 1–124; that stretch reads MGAGSSTEQR…DITKDEQEET (124 aa). Gly2 carries N-myristoyl glycine lipidation. A phosphoserine mark is found at Ser11, Ser18, Ser22, and Ser27. Positions 30-48 are enriched in low complexity; the sequence is GPAAEASGAAGDPADADPA. The span at 75 to 86 shows a compositional bias: acidic residues; it reads ESQDGQEEEVTV. Residues 89–105 show a composition bias toward basic and acidic residues; that stretch reads VGQRESEDVKEKDRAKE. Ser136 bears the Phosphoserine mark. 2 disordered regions span residues 175–281 and 296–353; these read SDTV…ETTS and KKTS…SADY. Residues 212 to 227 show a composition bias toward basic and acidic residues; sequence ASKESELKQSTEKQEG. The span at 228–247 shows a compositional bias: polar residues; that stretch reads TLKQAQSSTEIPLQAESGQG. Residues Ser234 and Ser244 each carry the phosphoserine modification. The span at 251 to 266 shows a compositional bias: basic and acidic residues; it reads EAAKDGEENREKEPTK. The involved in PKC-binding stretch occupies residues 253–543; that stretch reads AKDGEENREK…QHIQTESPES (291 aa). Residues Ser270 and Ser273 each carry the phosphoserine modification. A compositionally biased stretch (polar residues) spans 270-281; sequence SPTSPVSNETTS. Over residues 302-320 the composition is skewed to basic and acidic residues; that stretch reads KPKEDDLETSEKRKEQEAE. Residues 321–342 show a composition bias toward acidic residues; it reads KVDEEEGEKTEPAPAEEQEPAE. At Thr330 the chain carries Phosphothreonine. Ser350 carries the post-translational modification Phosphoserine. Tyr353 carries the post-translational modification Phosphotyrosine. Phosphoserine is present on residues Ser371 and Ser467. Residues 421–479 form a disordered region; sequence GSGESLPPEKLAETQEVPQEAEPVEELMKTKEVCVSGGDHTQLTDLSPEEKMLPKHPEG. Positions 468-478 are enriched in basic and acidic residues; the sequence is PEEKMLPKHPE. 3 positions are modified to phosphoserine: Ser489, Ser505, and Ser507. The interval 492 to 825 is disordered; the sequence is RIKVQGSPLK…INEDDPDVPA (334 aa). Residues 497–511 are compositionally biased toward low complexity; it reads GSPLKKLFSSSGLKK. Residues 512 to 521 are compositionally biased toward basic residues; that stretch reads LSGKKQKGKR. Ser540, Ser543, Ser584, Ser598, Ser613, and Ser615 each carry phosphoserine. An AKAP CaM-binding 1 motif is present at residues 593–613; it reads ITPWASFKKMVTPKKRVRRPS. Residues 611 to 625 are compositionally biased toward basic and acidic residues; sequence RPSESDKEEELDKVK. A compositionally biased stretch (low complexity) spans 626-637; it reads SATLSSTESTAS. Residue Thr628 is modified to Phosphothreonine. Residues Ser630, Ser631, Ser634, and Ser637 each carry the phosphoserine modification. Basic and acidic residues predominate over residues 641-660; the sequence is DEVRAVGEEQRSEEPKRRVD. Phosphoserine is present on residues Ser682, Ser683, and Ser684. A compositionally biased stretch (basic and acidic residues) spans 696-710; that stretch reads DGHRAEEASKDKEAD. Residues 714–723 are compositionally biased toward polar residues; it reads ASTQEQDQAH. Residues 724–741 show a composition bias toward low complexity; that stretch reads GSSSPEPAGSPSEGEGVS. Ser733, Ser745, Ser767, and Ser786 each carry phosphoserine. The AKAP CaM-binding 2 motif lies at 740–760; sequence VSTWESFKRLVTPRKKSKSKL. The short motif at 781 to 801 is the AKAP CaM-binding 3 element; sequence EESWVSIKKFIPGRRKKRADG. Residue Thr871 is modified to Phosphothreonine. Residue Ser873 is modified to Phosphoserine. The tract at residues 970–1001 is disordered; sequence TEASGAEETTDMVSAVSQLSDSPDTTEEATPV. The span at 980-992 shows a compositional bias: polar residues; sequence DMVSAVSQLSDSP. A Glycyl lysine isopeptide (Lys-Gly) (interchain with G-Cter in SUMO1) cross-link involves residue Lys1030. Disordered stretches follow at residues 1055–1106, 1121–1211, 1232–1365, and 1391–1492; these read VEED…VTED, LMEQ…DVLE, EGEA…DKAD, and TVAT…REKI. Ser1059 carries the post-translational modification Phosphoserine. Polar residues predominate over residues 1130-1176; sequence SSETLTDSETNGSTPLADSDTPNGTQQDETVDSQDSNAIAAVKQSQV. 2 stretches are compositionally biased toward basic and acidic residues: residues 1198–1210 and 1239–1254; these read QEEH…RDVL and DGEK…ELEV. The residue at position 1292 (Ser1292) is a Phosphoserine. Residues 1293 to 1331 show a composition bias toward basic and acidic residues; sequence PEKREMGTDVEKEETETKTEQASEEHEQETAAPEHEGTH. Phosphoserine is present on residues Ser1351, Ser1355, and Ser1357. The span at 1467-1492 shows a compositional bias: basic and acidic residues; it reads QRSDEDNKPDAGPDAAGKESAAREKI. Residues 1501–1514 are RII-binding; the sequence is ELESKSNKIVQSVI. Residues Ser1546 and Ser1645 each carry the phosphoserine modification. The disordered stretch occupies residues 1568 to 1684; sequence TLSAVAQEGL…QEPKGDLTES (117 aa). Over residues 1653 to 1684 the composition is skewed to basic and acidic residues; sequence LTEEGDALKEEMNKAQTEEDDLQEPKGDLTES.

As to quaternary structure, binds to dimeric RII-alpha regulatory subunit of PKC. In terms of tissue distribution, isoform 1 is predominantly found in the nervous system. Isoform 3 is testis specific.

Its subcellular location is the cytoplasm. It localises to the cytoskeleton. The protein resides in the membrane. In terms of biological role, anchoring protein that mediates the subcellular compartmentation of protein kinase A (PKA) and protein kinase C (PKC). The protein is A-kinase anchor protein 12 (Akap12) of Mus musculus (Mouse).